A 340-amino-acid polypeptide reads, in one-letter code: Probable quinone oxidoreductase (340 aa).

Belongs to the zinc-containing alcohol dehydrogenase family. Quinone oxidoreductase subfamily.

It carries out the reaction 2 a quinone + NADPH + H(+) = 2 a 1,4-benzosemiquinone + NADP(+). This Leishmania amazonensis protein is Probable quinone oxidoreductase.